Consider the following 320-residue polypeptide: tRNA (guanine(10)-N2)-dimethyltransferase (320 aa).

The THUMP domain occupies 46–136 (EKFFERLAYT…DDKCYVGLLE (91 aa)).

It belongs to the methyltransferase superfamily. Trm-G10 family. Monomer.

It localises to the cytoplasm. The catalysed reaction is guanosine(10) in tRNA + 2 S-adenosyl-L-methionine = N(2)-dimethylguanosine(10) in tRNA + 2 S-adenosyl-L-homocysteine + 2 H(+). Functionally, catalyzes the adenosylmethionine-dependent methylation of the exocyclic amino group (N(2)) of guanosine at position 10 of various tRNAs. Acts via a two-step process that leads to the formation of either N(2)-monomethyl (m(2)G) or N(2)-dimethylguanosine (m(2)(2)G). The polypeptide is tRNA (guanine(10)-N2)-dimethyltransferase (trmG10) (Archaeoglobus fulgidus (strain ATCC 49558 / DSM 4304 / JCM 9628 / NBRC 100126 / VC-16)).